A 630-amino-acid polypeptide reads, in one-letter code: Glutathione hydrolase proenzyme 1 (630 aa).

The Cytoplasmic portion of the chain corresponds to 1-49 (MGINTSSAQSSGAASIARSSVNVKSGNRHLSSNKKSATSALEERASRPS). The chain crosses the membrane as a helical; Signal-anchor for type II membrane protein span at residues 50–70 (ILVTFLVLAGTILSLYIWPIL). At 71 to 630 (SPDLFFANQR…SRKQAVAAAY (560 aa)) the chain is on the lumenal side. Residue Asn156 is glycosylated (N-linked (GlcNAc...) asparagine). Residue Arg165 participates in L-glutamate binding. N-linked (GlcNAc...) asparagine glycosylation is found at Asn180, Asn315, Asn397, and Asn417. The active-site Nucleophile is Thr441. Residues Ser459, Asn461, Asp483, 511 to 512 (SS), and 532 to 533 (GG) each bind L-glutamate. Asn612 carries an N-linked (GlcNAc...) asparagine glycan.

This sequence belongs to the gamma-glutamyltransferase family. In terms of assembly, heterodimer composed of the light and heavy chains. The active site is located in the light chain. Post-translationally, cleaved by autocatalysis into a large and a small subunit.

It localises to the endoplasmic reticulum membrane. It carries out the reaction an N-terminal (5-L-glutamyl)-[peptide] + an alpha-amino acid = 5-L-glutamyl amino acid + an N-terminal L-alpha-aminoacyl-[peptide]. The enzyme catalyses glutathione + H2O = L-cysteinylglycine + L-glutamate. It catalyses the reaction an S-substituted glutathione + H2O = an S-substituted L-cysteinylglycine + L-glutamate. Its pathway is sulfur metabolism; glutathione metabolism. Functionally, catalyzes the transfer of the gamma-glutamyl moiety of glutathione (GSH) and other gamma-glutamyl compounds to amino acids and peptides. Major GSH-degrading enzyme, catalyzing the hydrolytic release of L-glutamate from GSH. The polypeptide is Glutathione hydrolase proenzyme 1 (ggt1) (Schizosaccharomyces pombe (strain 972 / ATCC 24843) (Fission yeast)).